The following is a 313-amino-acid chain: Ankyrin repeat family A protein 2 (313 aa).

ANK repeat units lie at residues 148–180 (ANSLSVHQLAAQGEMLYLATRIEQENVINHTDE), 181–213 (EGFTPLMWAAAHGQIAVVEFLLQNGADPQLLGK), 214–246 (GRESALSLACSKGYTDIVKMLLDCGVDVNEYDW), 247–279 (NGGTPLLYAVHGNHVKCVKMLLENGADPTIETD), and 280–313 (SGYNSMDLAVALGYRSVQQVIESHLLKLLQNIKE).

As to quaternary structure, interacts (via ANK repeats) with CCDC8 (via PxLPxI/L motif); mediates the interaction with the 3M complex which is composed of CCDC8, CUL7 and OBSL1. Interacts (via ANK repeats) with HDAC4 (via PxLPxI/L motif). Interacts (via ANK repeats) with HDAC5 (via PxLPxI/L motif). Interacts (via ANK repeats) with LRP2/megalin (via PxLPxI/L motif). Interacts (via ANK repeats) with RFX7 (via PxLPxI/L motif). Interacts with AHRR. Interacts with NEK6.

It is found in the cytoplasm. Its subcellular location is the cytoskeleton. The protein localises to the membrane. In terms of biological role, may regulate the interaction between the 3M complex and the histone deacetylases HDAC4 and HDAC5. May also regulate LRP2/megalin. This is Ankyrin repeat family A protein 2 (ANKRA2) from Bos taurus (Bovine).